Consider the following 117-residue polypeptide: Protein Aeq5-like2 (117 aa).

Over 1–36 (MLVNARAIRQSIGIVVAQCRRDLESNRTLDYRTRMR) the chain is Cytoplasmic. Residues 37–56 (TSLILVAMVMVSVLLPYTYG) form a helical membrane-spanning segment. Topologically, residues 57 to 117 (SSCDSFCTEQ…RFTKEPTEES (61 aa)) are extracellular. 4 disulfides stabilise this stretch: Cys-59–Cys-94, Cys-63–Cys-90, Cys-70–Cys-83, and Cys-74–Cys-80.

Post-translationally, the mature peptide may be cleaved at a dibasic residue site and be shorter than the sequence shown (possibly residues 1-94). Expressed in endodermal ganglion neurons, apparently bipolar and following mesentery folds (observed in both planulae and primary polyps). It not expressed in nematocytes.

Its subcellular location is the membrane. In Nematostella vectensis (Starlet sea anemone), this protein is Protein Aeq5-like2.